Reading from the N-terminus, the 470-residue chain is ATP synthase subunit beta (470 aa).

148-155 (GGAGVGKT) contacts ATP.

It belongs to the ATPase alpha/beta chains family. As to quaternary structure, F-type ATPases have 2 components, CF(1) - the catalytic core - and CF(0) - the membrane proton channel. CF(1) has five subunits: alpha(3), beta(3), gamma(1), delta(1), epsilon(1). CF(0) has three main subunits: a(1), b(2) and c(9-12). The alpha and beta chains form an alternating ring which encloses part of the gamma chain. CF(1) is attached to CF(0) by a central stalk formed by the gamma and epsilon chains, while a peripheral stalk is formed by the delta and b chains.

It is found in the cell inner membrane. It catalyses the reaction ATP + H2O + 4 H(+)(in) = ADP + phosphate + 5 H(+)(out). Functionally, produces ATP from ADP in the presence of a proton gradient across the membrane. The catalytic sites are hosted primarily by the beta subunits. This chain is ATP synthase subunit beta, found in Teredinibacter turnerae (strain ATCC 39867 / T7901).